A 101-amino-acid chain; its full sequence is Small ribosomal subunit protein uS14A (101 aa).

The protein belongs to the universal ribosomal protein uS14 family. As to quaternary structure, part of the 30S ribosomal subunit. Contacts proteins S3 and S10.

Its function is as follows. Binds 16S rRNA, required for the assembly of 30S particles and may also be responsible for determining the conformation of the 16S rRNA at the A site. This Salinispora tropica (strain ATCC BAA-916 / DSM 44818 / JCM 13857 / NBRC 105044 / CNB-440) protein is Small ribosomal subunit protein uS14A.